Here is a 553-residue protein sequence, read N- to C-terminus: Chaperonin GroEL (553 aa).

ATP is bound by residues 29 to 32, Lys-50, 86 to 90, Gly-424, and Asp-504; these read TLGP and DGTTT.

This sequence belongs to the chaperonin (HSP60) family. As to quaternary structure, forms a cylinder of 14 subunits composed of two heptameric rings stacked back-to-back. Interacts with the co-chaperonin GroES.

It is found in the cytoplasm. It catalyses the reaction ATP + H2O + a folded polypeptide = ADP + phosphate + an unfolded polypeptide.. Functionally, together with its co-chaperonin GroES, plays an essential role in assisting protein folding. The GroEL-GroES system forms a nano-cage that allows encapsulation of the non-native substrate proteins and provides a physical environment optimized to promote and accelerate protein folding. The chain is Chaperonin GroEL from Koribacter versatilis (strain Ellin345).